Consider the following 100-residue polypeptide: Transcription and mRNA export factor SUS1 (100 aa).

This sequence belongs to the ENY2 family. In terms of assembly, component of the nuclear pore complex (NPC)-associated TREX-2 complex (transcription and export complex 2), composed of at least SUS1, SAC3, THP1, SEM1, and CDC31. TREX-2 contains 2 SUS1 chains. The TREX-2 complex interacts with the nucleoporin NUP1. Component of the 1.8 MDa SAGA transcription coactivator-HAT complex. SAGA is built of 5 distinct domains with specialized functions. Within the SAGA complex, SUS1, SGF11, SGF73 and UBP8 form an additional subcomplex of SAGA called the DUB module (deubiquitination module). Interacts directly with THP1, SAC3, SGF11, and with the RNA polymerase II.

It localises to the nucleus. It is found in the nucleoplasm. Its subcellular location is the cytoplasm. The protein resides in the P-body. In terms of biological role, involved in mRNA export coupled transcription activation by association with both the TREX-2 and the SAGA complexes. At the promoters, SAGA is required for recruitment of the basal transcription machinery. It influences RNA polymerase II transcriptional activity through different activities such as TBP interaction and promoter selectivity, interaction with transcription activators, and chromatin modification through histone acetylation and deubiquitination. Within the SAGA complex, participates in a subcomplex required for deubiquitination of H2B and for the maintenance of steady-state H3 methylation levels. The TREX-2 complex functions in docking export-competent ribonucleoprotein particles (mRNPs) to the nuclear entrance of the nuclear pore complex (nuclear basket). TREX-2 participates in mRNA export and accurate chromatin positioning in the nucleus by tethering genes to the nuclear periphery. May also be involved in cytoplasmic mRNA decay by interaction with components of P-bodies. The chain is Transcription and mRNA export factor SUS1 from Candida glabrata (strain ATCC 2001 / BCRC 20586 / JCM 3761 / NBRC 0622 / NRRL Y-65 / CBS 138) (Yeast).